The following is a 36-amino-acid chain: Dermonecrotic toxin LgSicTox-beta-LOXN1/LOXN7 (36 aa).

The protein belongs to the arthropod phospholipase D family. Class II subfamily. Mg(2+) is required as a cofactor. Post-translationally, contains 2 disulfide bonds. As to expression, expressed by the venom gland.

It is found in the secreted. The enzyme catalyses an N-(acyl)-sphingosylphosphocholine = an N-(acyl)-sphingosyl-1,3-cyclic phosphate + choline. It carries out the reaction an N-(acyl)-sphingosylphosphoethanolamine = an N-(acyl)-sphingosyl-1,3-cyclic phosphate + ethanolamine. The catalysed reaction is a 1-acyl-sn-glycero-3-phosphocholine = a 1-acyl-sn-glycero-2,3-cyclic phosphate + choline. It catalyses the reaction a 1-acyl-sn-glycero-3-phosphoethanolamine = a 1-acyl-sn-glycero-2,3-cyclic phosphate + ethanolamine. Functionally, dermonecrotic toxins cleave the phosphodiester linkage between the phosphate and headgroup of certain phospholipids (sphingolipid and lysolipid substrates), forming an alcohol (often choline) and a cyclic phosphate. This toxin acts on sphingomyelin (SM). It may also act on ceramide phosphoethanolamine (CPE), lysophosphatidylcholine (LPC) and lysophosphatidylethanolamine (LPE), but not on lysophosphatidylserine (LPS), and lysophosphatidylglycerol (LPG). It acts by transphosphatidylation, releasing exclusively cyclic phosphate products as second products. Induces dermonecrosis, hemolysis, increased vascular permeability, edema, inflammatory response, and platelet aggregation. This Loxosceles gaucho (Spider) protein is Dermonecrotic toxin LgSicTox-beta-LOXN1/LOXN7.